The following is a 332-amino-acid chain: NADH-quinone oxidoreductase subunit H (332 aa).

The next 9 helical transmembrane spans lie at 4–24 (FAFFALETLIKCIIIIAIFAS), 44–64 (IGPDMVGPFGLIQLVADMIKL), 78–98 (FIFAIAPLISAICAFVSLAAI), 120–140 (VALLFVIGTSGLCFYAVFLGG), 165–185 (VGALALIAIIMLVGSFSLVDI), 194–214 (FSWLIFKQPLAFVLFIIALFI), 255–275 (IAGAILVTLLFLGGFNSFWII), 279–299 (IMMIVKSSFIFFWYFWARAAF), and 312–332 (YLILIPLAVLNLLITALTVLL).

Belongs to the complex I subunit 1 family. In terms of assembly, NDH-1 is composed of 14 different subunits. Subunits NuoA, H, J, K, L, M, N constitute the membrane sector of the complex.

It localises to the cell inner membrane. It catalyses the reaction a quinone + NADH + 5 H(+)(in) = a quinol + NAD(+) + 4 H(+)(out). Its function is as follows. NDH-1 shuttles electrons from NADH, via FMN and iron-sulfur (Fe-S) centers, to quinones in the respiratory chain. The immediate electron acceptor for the enzyme in this species is believed to be ubiquinone. Couples the redox reaction to proton translocation (for every two electrons transferred, four hydrogen ions are translocated across the cytoplasmic membrane), and thus conserves the redox energy in a proton gradient. This subunit may bind ubiquinone. The polypeptide is NADH-quinone oxidoreductase subunit H (Campylobacter jejuni subsp. jejuni serotype O:2 (strain ATCC 700819 / NCTC 11168)).